The following is a 219-amino-acid chain: Uracil-DNA glycosylase (219 aa).

Residue aspartate 61 is the Proton acceptor of the active site.

This sequence belongs to the uracil-DNA glycosylase (UDG) superfamily. UNG family.

Its subcellular location is the cytoplasm. It catalyses the reaction Hydrolyzes single-stranded DNA or mismatched double-stranded DNA and polynucleotides, releasing free uracil.. In terms of biological role, excises uracil residues from the DNA which can arise as a result of misincorporation of dUMP residues by DNA polymerase or due to deamination of cytosine. This is Uracil-DNA glycosylase from Exiguobacterium sibiricum (strain DSM 17290 / CCUG 55495 / CIP 109462 / JCM 13490 / 255-15).